A 478-amino-acid chain; its full sequence is Elongation factor Tu, chloroplastic (478 aa).

Residues 1-29 (MASISAATATSSTKLVSSNSTNPLLPSST) are compositionally biased toward low complexity. The interval 1-31 (MASISAATATSSTKLVSSNSTNPLLPSSTKP) is disordered. The transit peptide at 1-69 (MASISAATAT…THRHRRFTVR (69 aa)) directs the protein to the chloroplast. In terms of domain architecture, tr-type G spans 79-283 (KPHVNIGTIG…AVDSYIPIPV (205 aa)). Residues 88 to 95 (GHVDHGKT) form a G1 region. Residue 88 to 95 (GHVDHGKT) coordinates GTP. The segment at 129–133 (GITIN) is G2. Residues 150-153 (DCPG) are G3. GTP-binding positions include 150–154 (DCPGH) and 205–208 (NKQD). Residues 205-208 (NKQD) are G4. The G5 stretch occupies residues 243–245 (SAL).

Belongs to the TRAFAC class translation factor GTPase superfamily. Classic translation factor GTPase family. EF-Tu/EF-1A subfamily.

The protein localises to the plastid. The protein resides in the chloroplast. Functionally, this protein promotes the GTP-dependent binding of aminoacyl-tRNA to the A-site of ribosomes during protein biosynthesis. The polypeptide is Elongation factor Tu, chloroplastic (TUFA) (Nicotiana tabacum (Common tobacco)).